We begin with the raw amino-acid sequence, 273 residues long: Transposable element Tcb2 transposase (273 aa).

The protein belongs to the transposase 5 family.

It localises to the nucleus. Probably essential for transposable element Tcb2 transposition. The chain is Transposable element Tcb2 transposase from Caenorhabditis briggsae.